We begin with the raw amino-acid sequence, 345 residues long: Nuclear hormone receptor family nhr-176 (345 aa).

Residues 7–82 (IQPCLVCGQS…AGMLEKMVFS (76 aa)) constitute a DNA-binding region (nuclear receptor). The NR C4-type zinc-finger motif lies at 10 to 30 (CLVCGQSSNSILFGAPSCRAC). Residues 46–65 (NNCLGECSFAKKSMKPCQSC) form an NR C4-type; degenerate zinc finger. The 251-residue stretch at 92-342 (FEKSILEELE…CPLYAISTNS (251 aa)) folds into the NR LBD domain. The interval 331-342 (SGCPLYAISTNS) is AF-2.

It localises to the nucleus. Its function is as follows. Nuclear hormone receptor. Binds to xenobiotic ligand thiabendazole (TBZ), in vitro. Involved in the up-regulation of phase I detoxification genes, such as probable cytochrome P450 cyp-35d1, in response to TBZ. In Caenorhabditis elegans, this protein is Nuclear hormone receptor family nhr-176.